Consider the following 130-residue polypeptide: Small ribosomal subunit protein uS9 (130 aa).

It belongs to the universal ribosomal protein uS9 family.

This chain is Small ribosomal subunit protein uS9, found in Yersinia pseudotuberculosis serotype O:1b (strain IP 31758).